The following is a 132-amino-acid chain: Large ribosomal subunit protein bL17 (132 aa).

Belongs to the bacterial ribosomal protein bL17 family. In terms of assembly, part of the 50S ribosomal subunit. Contacts protein L32.

This chain is Large ribosomal subunit protein bL17, found in Anaplasma phagocytophilum (strain HZ).